A 159-amino-acid chain; its full sequence is Cyclic pyranopterin monophosphate synthase (159 aa).

Substrate-binding positions include 76–78 (LCH) and 114–115 (ME). Residue D129 is part of the active site.

This sequence belongs to the MoaC family. In terms of assembly, homohexamer; trimer of dimers.

The catalysed reaction is (8S)-3',8-cyclo-7,8-dihydroguanosine 5'-triphosphate = cyclic pyranopterin phosphate + diphosphate. Its pathway is cofactor biosynthesis; molybdopterin biosynthesis. Functionally, catalyzes the conversion of (8S)-3',8-cyclo-7,8-dihydroguanosine 5'-triphosphate to cyclic pyranopterin monophosphate (cPMP). The chain is Cyclic pyranopterin monophosphate synthase from Psychromonas ingrahamii (strain DSM 17664 / CCUG 51855 / 37).